We begin with the raw amino-acid sequence, 70 residues long: Mu-conotoxin-like Am3.4 (70 aa).

Positions 1–20 are cleaved as a signal peptide; it reads MMYKLGVLLIICLLLFPLTA. A propeptide spanning residues 21–53 is cleaved from the precursor; sequence VPQDGDQPADRPAERMQDDISFEHDRFFDPVKR. Intrachain disulfides connect Cys54/Cys69, Cys55/Cys65, and Cys61/Cys68. Position 67 is a 4-hydroxyproline; partial; in major form (Pro67). Cys69 bears the Cysteine amide mark.

The protein belongs to the conotoxin M superfamily. Post-translationally, contains 3 disulfide bonds. In terms of tissue distribution, expressed by the venom duct.

The protein localises to the secreted. In terms of biological role, mu-conotoxins block voltage-gated sodium channels (Nav). In Conus amadis (Amadis cone), this protein is Mu-conotoxin-like Am3.4.